A 198-amino-acid polypeptide reads, in one-letter code: Recombination protein RecR (198 aa).

Residues 58 to 73 (CSVCNNLTEKDPCDFC) form a C4-type zinc finger. The Toprim domain maps to 81-175 (NLICVVESPK…KVTRIAHGLP (95 aa)).

The protein belongs to the RecR family.

Its function is as follows. May play a role in DNA repair. It seems to be involved in an RecBC-independent recombinational process of DNA repair. It may act with RecF and RecO. The protein is Recombination protein RecR of Halothermothrix orenii (strain H 168 / OCM 544 / DSM 9562).